The chain runs to 92 residues: Small ribosomal subunit protein uS19 (92 aa).

Belongs to the universal ribosomal protein uS19 family.

Its function is as follows. Protein S19 forms a complex with S13 that binds strongly to the 16S ribosomal RNA. The protein is Small ribosomal subunit protein uS19 of Shewanella putrefaciens (strain CN-32 / ATCC BAA-453).